The chain runs to 375 residues: Chaperone protein DnaJ (375 aa).

The J domain occupies 5–70; it reads DYYEVLGVER…GKRSAYDQYG (66 aa). Residues 134 to 212 form a CR-type zinc finger; that stretch reads GTTVTIRVPT…CHGQGRVEES (79 aa). 8 residues coordinate Zn(2+): Cys-147, Cys-150, Cys-164, Cys-167, Cys-186, Cys-189, Cys-200, and Cys-203. 4 CXXCXGXG motif repeats span residues 147–154, 164–171, 186–193, and 200–207; these read CKTCDGTG, CTTCGGIG, CPRCHGSG, and CGSCHGQG.

Belongs to the DnaJ family. In terms of assembly, homodimer. Zn(2+) is required as a cofactor.

The protein resides in the cytoplasm. Its function is as follows. Participates actively in the response to hyperosmotic and heat shock by preventing the aggregation of stress-denatured proteins and by disaggregating proteins, also in an autonomous, DnaK-independent fashion. Unfolded proteins bind initially to DnaJ; upon interaction with the DnaJ-bound protein, DnaK hydrolyzes its bound ATP, resulting in the formation of a stable complex. GrpE releases ADP from DnaK; ATP binding to DnaK triggers the release of the substrate protein, thus completing the reaction cycle. Several rounds of ATP-dependent interactions between DnaJ, DnaK and GrpE are required for fully efficient folding. Also involved, together with DnaK and GrpE, in the DNA replication of plasmids through activation of initiation proteins. This Ectopseudomonas mendocina (strain ymp) (Pseudomonas mendocina) protein is Chaperone protein DnaJ.